The primary structure comprises 364 residues: GDP-perosamine synthase (364 aa).

Residue lysine 183 is modified to N6-(pyridoxal phosphate)lysine.

Belongs to the DegT/DnrJ/EryC1 family. Homodecamer. Pyridoxal 5'-phosphate serves as cofactor.

The catalysed reaction is GDP-alpha-D-perosamine + 2-oxoglutarate = GDP-4-dehydro-alpha-D-rhamnose + L-glutamate. The protein operates within bacterial outer membrane biogenesis; LPS O-antigen biosynthesis. With respect to regulation, divalent ions have no significant effect on activity. Functionally, catalyzes the synthesis of GDP-perosamine from GDP-4-keto-6-deoxy-D-mannose and L-glutamate. Can use only L-glutamate as amino donor. The polypeptide is GDP-perosamine synthase (Escherichia coli O157:H7).